The following is a 491-amino-acid chain: MNTQDLAKLRSIVPEMRRVRHIHFVGIGGAGMGGIAEVLANEGYQISGSDLAPNPVTQQLSQLGATIYFNHRPENVRDASVVVVSSAISADNPEIVAAHEARIPVIRRAEMLAELMRFRHGIAIAGTHGKTTTTAMVSSIYAEAGLDPTFVNGGLVKAAGVHARLGHSRYLIAEADESDASFLHLQPMVAIVTNIEADHMDTYHGDFENLKQTFINFLHNLPFYGRAVMCVDDPVIRELLPRVGRQITTYGFSDDADVRVEDYRQVGAQGHFRLVRQDKAILQVTLNAPGRHNALNAAAAVAVATEEGIDDRAILRALESFQGTGRRFDFLGEFPLAEVNGKPGSAMLIDDYGHHPTEVDATIKAARAGWPDKNLVMVFQPHRYTRTRDLYDDFANVLTQVDALLMLDVYPAGEAPIPGADSRSLCRTIRGRGKVDPILVPDSTQAAEMLASVLTGNDLVLVQGAGNIGKIARHLAEIKLIPQKTEEERHG.

126–132 serves as a coordination point for ATP; it reads GTHGKTT.

This sequence belongs to the MurCDEF family.

It localises to the cytoplasm. It carries out the reaction UDP-N-acetyl-alpha-D-muramate + L-alanine + ATP = UDP-N-acetyl-alpha-D-muramoyl-L-alanine + ADP + phosphate + H(+). It participates in cell wall biogenesis; peptidoglycan biosynthesis. Cell wall formation. The chain is UDP-N-acetylmuramate--L-alanine ligase from Klebsiella pneumoniae subsp. pneumoniae (strain ATCC 700721 / MGH 78578).